Reading from the N-terminus, the 553-residue chain is Solute carrier family 45 member 3 (553 aa).

11 consecutive transmembrane segments (helical) span residues 19–39, 52–72, 88–108, 120–140, 161–181, 198–218, 275–295, 323–343, 353–373, 382–402, and 522–542; these read LLIN…ITYV, FMTM…PLLG, FIWA…RAGW, LELA…QVCF, YSVY…LPAI, CLFG…LLVA, FVAE…YTDF, MGSL…LVMD, AVYL…CLSH, AALT…LASL, and AYMV…TQVV.

This sequence belongs to the glycoside-pentoside-hexuronide (GPH) cation symporter transporter (TC 2.A.2) family.

Its subcellular location is the membrane. The catalysed reaction is sucrose(out) + H(+)(out) = sucrose(in) + H(+)(in). Functionally, proton-associated sucrose transporter. May be able to transport also glucose and fructose. The sequence is that of Solute carrier family 45 member 3 (SLC45A3) from Macaca fascicularis (Crab-eating macaque).